The sequence spans 103 residues: Large ribosomal subunit protein uL24 (103 aa).

The protein belongs to the universal ribosomal protein uL24 family. Part of the 50S ribosomal subunit.

In terms of biological role, one of two assembly initiator proteins, it binds directly to the 5'-end of the 23S rRNA, where it nucleates assembly of the 50S subunit. One of the proteins that surrounds the polypeptide exit tunnel on the outside of the subunit. This is Large ribosomal subunit protein uL24 from Pasteurella multocida (strain Pm70).